A 152-amino-acid chain; its full sequence is Protein FERTILITY RESTORER RF2, mitochondrial (152 aa).

The N-terminal 52 residues, M1–C52, are a transit peptide targeting the mitochondrion. Positions C52–V69 are enriched in polar residues. The disordered stretch occupies residues C52–G99.

The protein localises to the mitochondrion. Its function is as follows. Restores fertility in rice varieties with LD-type cytoplasmic male sterility (CMS). CMS is caused by genetic incompatibility between nuclei and mitochondria within male reproductive organs. Corresponds to the functional allele of RF2, which is dependent of the presence of Ile-78 in the japonica cultivars Fukuyama and Owarihatamochi (AC F1SZ42), and indica cultivar Kasalath (AC F1SZ41). Non-functional RF2 alleles are found in japonica cultivars Taichung 65 and Nipponbare (AC F1SZ44), where Ile-78 is replaced by Thr-78. The chain is Protein FERTILITY RESTORER RF2, mitochondrial from Oryza sativa subsp. japonica (Rice).